A 361-amino-acid polypeptide reads, in one-letter code: Spermatogenesis-associated protein 17 (361 aa).

IQ domains follow at residues Glu-32–Ile-61, Leu-55–Tyr-84, and Tyr-91–Tyr-120.

It localises to the cytoplasm. This chain is Spermatogenesis-associated protein 17 (SPATA17), found in Homo sapiens (Human).